We begin with the raw amino-acid sequence, 636 residues long: 1-deoxy-D-xylulose-5-phosphate synthase (636 aa).

Residues His72 and 113–115 contribute to the thiamine diphosphate site; that span reads GHA. Position 144 (Asp144) interacts with Mg(2+). Thiamine diphosphate-binding positions include 145 to 146, Asn174, Tyr287, and Glu370; that span reads GS. Residue Asn174 coordinates Mg(2+).

It belongs to the transketolase family. DXPS subfamily. As to quaternary structure, homodimer. It depends on Mg(2+) as a cofactor. Thiamine diphosphate serves as cofactor.

It catalyses the reaction D-glyceraldehyde 3-phosphate + pyruvate + H(+) = 1-deoxy-D-xylulose 5-phosphate + CO2. It participates in metabolic intermediate biosynthesis; 1-deoxy-D-xylulose 5-phosphate biosynthesis; 1-deoxy-D-xylulose 5-phosphate from D-glyceraldehyde 3-phosphate and pyruvate: step 1/1. Functionally, catalyzes the acyloin condensation reaction between C atoms 2 and 3 of pyruvate and glyceraldehyde 3-phosphate to yield 1-deoxy-D-xylulose-5-phosphate (DXP). The chain is 1-deoxy-D-xylulose-5-phosphate synthase from Synechococcus sp. (strain ATCC 27144 / PCC 6301 / SAUG 1402/1) (Anacystis nidulans).